A 120-amino-acid chain; its full sequence is Spermidine export protein MdtJ (120 aa).

4 consecutive transmembrane segments (helical) span residues 1–21 (MFYW…TLSM), 31–51 (TGFI…AFAV), 54–74 (IALG…ITLF), and 81–101 (ESLS…IVLI).

This sequence belongs to the drug/metabolite transporter (DMT) superfamily. Small multidrug resistance (SMR) (TC 2.A.7.1) family. MdtJ subfamily. As to quaternary structure, forms a complex with MdtI.

The protein resides in the cell inner membrane. Functionally, catalyzes the excretion of spermidine. This Klebsiella pneumoniae subsp. pneumoniae (strain ATCC 700721 / MGH 78578) protein is Spermidine export protein MdtJ.